The chain runs to 574 residues: Glutamate--tRNA ligase (574 aa).

Residues 109-119 carry the 'HIGH' region motif; that stretch reads PNPDFVIHMGN.

Belongs to the class-I aminoacyl-tRNA synthetase family. Glutamate--tRNA ligase type 2 subfamily.

The protein localises to the cytoplasm. It carries out the reaction tRNA(Glu) + L-glutamate + ATP = L-glutamyl-tRNA(Glu) + AMP + diphosphate. Its function is as follows. Catalyzes the attachment of glutamate to tRNA(Glu) in a two-step reaction: glutamate is first activated by ATP to form Glu-AMP and then transferred to the acceptor end of tRNA(Glu). This Aeropyrum pernix (strain ATCC 700893 / DSM 11879 / JCM 9820 / NBRC 100138 / K1) protein is Glutamate--tRNA ligase.